The following is a 294-amino-acid chain: Transmembrane protein 178B (294 aa).

The N-terminal stretch at 1–23 (MAAGKLLLYAGLSLSLCALGMLA) is a signal peptide. Transmembrane regions (helical) follow at residues 172-192 (AGFM…GMLG), 206-226 (LLFL…VAGI), and 252-272 (MFCA…CTLA).

This sequence belongs to the TMEM178 family.

It is found in the membrane. This is Transmembrane protein 178B (tmem178b) from Danio rerio (Zebrafish).